The sequence spans 389 residues: tRNA N(3)-cytidine methyltransferase METTL2 (389 aa).

Residues 1-20 (MAASFPEGVPETEDGKRPQF) form a disordered region. Trp78, Tyr82, Gly181, Asp206, Asp232, Leu233, and Ile253 together coordinate S-adenosyl-L-methionine.

It belongs to the methyltransferase superfamily. METL family. In terms of assembly, monomer. Interacts with DALRD3.

It localises to the cytoplasm. The enzyme catalyses cytidine(32) in tRNA(Thr) + S-adenosyl-L-methionine = N(3)-methylcytidine(32) in tRNA(Thr) + S-adenosyl-L-homocysteine + H(+). The catalysed reaction is cytidine(32) in tRNA(Arg)(CCU) + S-adenosyl-L-methionine = N(3)-methylcytidine(32) in tRNA(Arg)(CCU) + S-adenosyl-L-homocysteine + H(+). S-adenosyl-L-methionine-dependent methyltransferase that mediates N(3)-methylcytidine modification of residue 32 of the tRNA anticodon loop of tRNA(Thr)(UGU) and tRNA(Arg)(CCU). N(3)-methylcytidine methylation by METTL2 requires the N6-threonylcarbamoylation of tRNA (t6A37) by the EKC/KEOPS complex as prerequisite. This Mus musculus (Mouse) protein is tRNA N(3)-cytidine methyltransferase METTL2.